The sequence spans 260 residues: MARGGAGRAVALGLVLRLLFGLRTGLEAAPAPAHTRVQVSGSRADSCPTDTFQCLTSGYCVPLSWRCDGDQDCSDGSDEEDCRIESCAQNGQCQPQSALPCSCDNISGCSDVSDKNLNCSRPPCQESELHCILDDVCIPHTWRCDGHPDCLDSSDELSCDTDTEIDKIFQEENATTTRISTTMENETSFRNVTFTSAGDSSRNPSAYGVIAAAGVLSAILVSATLLILLRLRGQGYLPPPGLLVAVKESLLLSERKTSLI.

A signal peptide spans 1–28 (MARGGAGRAVALGLVLRLLFGLRTGLEA). Residues 29-208 (APAPAHTRVQ…DSSRNPSAYG (180 aa)) lie on the Extracellular side of the membrane. The 38-residue stretch at 46–83 (SCPTDTFQCLTSGYCVPLSWRCDGDQDCSDGSDEEDCR) folds into the LDL-receptor class A 1 domain. 3 disulfides stabilise this stretch: cysteine 47–cysteine 60, cysteine 54–cysteine 73, and cysteine 67–cysteine 82. Ca(2+) is bound by residues tryptophan 65, aspartate 68, aspartate 70, aspartate 72, aspartate 78, and glutamate 79. Asparagine 118 carries an N-linked (GlcNAc...) asparagine glycan. The LDL-receptor class A 2 domain occupies 123–160 (PCQESELHCILDDVCIPHTWRCDGHPDCLDSSDELSCD). Cystine bridges form between cysteine 124–cysteine 137, cysteine 131–cysteine 150, and cysteine 144–cysteine 159. Positions 142, 145, 147, 149, 155, and 156 each coordinate Ca(2+). Asparagine 185 is a glycosylation site (N-linked (GlcNAc...) asparagine). A helical membrane pass occupies residues 209-229 (VIAAAGVLSAILVSATLLILL). The Cytoplasmic portion of the chain corresponds to 230 to 260 (RLRGQGYLPPPGLLVAVKESLLLSERKTSLI).

Interacts (via LDL-receptor class A domains) with TCN2.

It localises to the cell membrane. Its function is as follows. Receptor for transcobalamin saturated with cobalamin (TCbl). Plays an important role in cobalamin uptake. Plasma membrane protein that is expressed on follicular dendritic cells (FDC) and mediates interaction with germinal center B cells. Functions as a costimulator to promote B cell responses to antigenic stimuli; promotes B cell differentiation and proliferation. Germinal center-B (GC-B) cells differentiate into memory B-cells and plasma cells (PC) through interaction with T-cells and follicular dendritic cells (FDC). CD320 augments the proliferation of PC precursors generated by IL-10. The protein is CD320 antigen (Cd320) of Mus musculus (Mouse).